The sequence spans 474 residues: Stabilizer of axonemal microtubules 1 (474 aa).

12 mn regions span residues 30–64 (KPCL…KGPI), 65–97 (PMEG…PSEE), 98–131 (NMDL…PCSD), 132–165 (KMEC…PASV), 166–199 (RFDN…LCNI), 200–232 (PLED…PCEI), 233–266 (PFES…GLDM), 267–299 (PFCN…PPED), 300–332 (RMDL…KKCG), 333–366 (RFEG…LPTE), 367–400 (PLDC…RGNV), and 401–434 (PVES…TFEE). Residues 446–474 (VSQAGSQQSSHLSVDDSENPNQRELEVLA) form a disordered region. The span at 448 to 457 (QAGSQQSSHL) shows a compositional bias: polar residues.

Belongs to the FAM154 family. In terms of assembly, associates with microtubules via the Mn regions. As to expression, widely expressed, with highest levels in testis. Expressed in mature spermatozoa (at protein level).

Its subcellular location is the cytoplasm. The protein resides in the cytoskeleton. The protein localises to the microtubule organizing center. It localises to the centrosome. It is found in the centriole. Its subcellular location is the cilium basal body. The protein resides in the cilium axoneme. The protein localises to the flagellum axoneme. May play a role in the regulation of cilium length. Stabilizes microtubules at low temperature. This is Stabilizer of axonemal microtubules 1 (SAXO1) from Homo sapiens (Human).